Here is a 224-residue protein sequence, read N- to C-terminus: Uracil-DNA glycosylase (224 aa).

Asp64 (proton acceptor) is an active-site residue.

Belongs to the uracil-DNA glycosylase (UDG) superfamily. UNG family.

The protein resides in the cytoplasm. The enzyme catalyses Hydrolyzes single-stranded DNA or mismatched double-stranded DNA and polynucleotides, releasing free uracil.. Functionally, excises uracil residues from the DNA which can arise as a result of misincorporation of dUMP residues by DNA polymerase or due to deamination of cytosine. The polypeptide is Uracil-DNA glycosylase (Geobacillus sp. (strain WCH70)).